A 316-amino-acid polypeptide reads, in one-letter code: Tetrahydromethanopterin S-methyltransferase subunit H (316 aa).

This sequence belongs to the MtrH family. The complex is composed of 8 subunits; MtrA, MtrB, MtrC, MtrD, MtrE, MtrF, MtrG and MtrH.

It catalyses the reaction 5-methyl-5,6,7,8-tetrahydromethanopterin + coenzyme M + 2 Na(+)(in) = 5,6,7,8-tetrahydromethanopterin + methyl-coenzyme M + 2 Na(+)(out). It participates in one-carbon metabolism; methanogenesis from CO(2); methyl-coenzyme M from 5,10-methylene-5,6,7,8-tetrahydromethanopterin: step 2/2. Functionally, part of a complex that catalyzes the formation of methyl-coenzyme M and tetrahydromethanopterin from coenzyme M and methyl-tetrahydromethanopterin. This is an energy-conserving, sodium-ion translocating step. MtrH catalyzes the transfer of the methyl group from methyl-tetrahydromethanopterin to the corrinoid prosthetic group of MtrA. This is Tetrahydromethanopterin S-methyltransferase subunit H from Methanosarcina acetivorans (strain ATCC 35395 / DSM 2834 / JCM 12185 / C2A).